The following is a 437-amino-acid chain: MAAPRRYCAGLVRALLGARQVGSHAGREWLAPPGCLLGNQARCVSCVVGSTFSGPLLASASSRYGQDSALDRILGFSQPDSSLVPSVPAVSVHRDEQNLLLVHTPDMPENPRVLRVVLLGAPNAGKSTLSNQLLGRKVFPVSKKVHTTRCQALGVITEKETQVILLDTPGIISPVKQKRHHLERSLLEDPWTSMESADLVVVLVDVSDKWTRSRLNPQVLQCLTKFSQVPSILVLNKVDCLKQKSVLLELTAALTEGVVNGKKLNIKQALRSRSSTHCPGPETEGPNAHSVRNPQRIGWPYFQEIFMLSALNNKDVNTLKQYLLTQAQPGPWEFHSGVLTSQTPEEICANKIREKLLEYLPEEVPYGVQQKTVIWEEGPSGELVIQQNLLVPKESHVRILIGQKGLLISQIAQEVGRDLMDIFHCDVLIRLSVKLLK.

A mitochondrion-targeting transit peptide spans Met-1–Gln-20. The 219-residue stretch at Arg-112–Gly-330 folds into the Era-type G domain. The interval Gly-120–Ser-127 is G1. Residue Gly-120–Ser-127 coordinates GTP. Positions His-146–Cys-150 are G2. The interval Asp-167 to Gly-170 is G3. Asp-167–Ile-171 lines the GTP pocket. Ser-173 is modified (phosphoserine). Asn-236 to Asp-239 contacts GTP. The G4 stretch occupies residues Asn-236 to Asp-239. A disordered region spans residues Leu-270–Arg-292. Residues Leu-308 to Ala-310 are G5. One can recognise a KH type-2 domain in the interval Leu-360 to Lys-437.

This sequence belongs to the TRAFAC class TrmE-Era-EngA-EngB-Septin-like GTPase superfamily. Era GTPase family.

The protein localises to the mitochondrion matrix. It is found in the mitochondrion inner membrane. Functionally, probable GTPase that plays a role in the mitochondrial ribosomal small subunit assembly. Specifically binds the 12S mitochondrial rRNA (12S mt-rRNA) to a 33 nucleotide section delineating the 3' terminal stem-loop region. May act as a chaperone that protects the 12S mt-rRNA on the 28S mitoribosomal subunit during ribosomal small subunit assembly. This chain is GTPase Era, mitochondrial (Eral1), found in Mus musculus (Mouse).